A 145-amino-acid chain; its full sequence is D-aminoacyl-tRNA deacylase (145 aa).

The short motif at 137 to 138 (GP) is the Gly-cisPro motif, important for rejection of L-amino acids element.

The protein belongs to the DTD family. Homodimer.

The protein localises to the cytoplasm. It catalyses the reaction glycyl-tRNA(Ala) + H2O = tRNA(Ala) + glycine + H(+). The enzyme catalyses a D-aminoacyl-tRNA + H2O = a tRNA + a D-alpha-amino acid + H(+). Functionally, an aminoacyl-tRNA editing enzyme that deacylates mischarged D-aminoacyl-tRNAs. Also deacylates mischarged glycyl-tRNA(Ala), protecting cells against glycine mischarging by AlaRS. Acts via tRNA-based rather than protein-based catalysis; rejects L-amino acids rather than detecting D-amino acids in the active site. By recycling D-aminoacyl-tRNA to D-amino acids and free tRNA molecules, this enzyme counteracts the toxicity associated with the formation of D-aminoacyl-tRNA entities in vivo and helps enforce protein L-homochirality. The sequence is that of D-aminoacyl-tRNA deacylase from Rhodococcus opacus (strain B4).